The chain runs to 149 residues: Protein SprT-like (149 aa).

The region spanning 4-143 (TDYVKQVSLE…CGLCRGKLLL (140 aa)) is the SprT-like domain. H64 contributes to the Zn(2+) binding site. E65 is an active-site residue. Position 68 (H68) interacts with Zn(2+).

This sequence belongs to the SprT family. Requires Zn(2+) as cofactor.

The protein localises to the cytoplasm. The sequence is that of Protein SprT-like from Streptococcus pneumoniae (strain JJA).